Consider the following 1059-residue polypeptide: Ubiquitin carboxyl-terminal hydrolase 36 (1059 aa).

Disordered regions lie at residues 24 to 49 (VGNG…DSEM) and 94 to 148 (SNNN…KPKR). Residues 94–123 (SNNNNSSSCNGSNFGNSKVVGANGHDNGNN) show a composition bias toward low complexity. Polar residues predominate over residues 130–139 (QSESTQSGPS). The USP domain maps to 171–479 (TGMINVGNTC…NAYIMFYELD (309 aa)). The active-site Nucleophile is Cys180. The active-site Proton acceptor is His438. The segment at 505-673 (TVSSSSPTHT…KTPLKSSVKT (169 aa)) is disordered. Phosphoserine occurs at positions 508 and 510. The segment covering 528–539 (GYSNGHATGSSN) has biased composition (polar residues). Low complexity-rich tracts occupy residues 540–560 (AQKT…NGLQ), 592–611 (NGNK…KSVN), and 633–647 (ATAT…RPTA). Residues 655 to 664 (MTEDSSDKPK) are compositionally biased toward basic and acidic residues. Residues Thr673 and Thr682 each carry the phosphothreonine modification. Disordered regions lie at residues 687 to 893 (LVPY…EAST), 926 to 998 (KELV…RYHN), and 1012 to 1059 (KYNR…QSSS). Phosphoserine occurs at positions 692 and 694. 2 stretches are compositionally biased toward low complexity: residues 729–739 (TKTNGGSLTNG) and 752–765 (SSSS…ASAA). Position 766 is a phosphoserine (Ser766). Acidic residues predominate over residues 766–776 (SDDEDADEEEE). Residues 779 to 795 (KLTNGWQPQKQSQSLTQ) show a composition bias toward polar residues. Pro residues predominate over residues 799 to 808 (PPSPKTPPSP). Ser801 is modified (phosphoserine). Thr804 carries the post-translational modification Phosphothreonine. Position 807 is a phosphoserine (Ser807). The span at 825-839 (DNEDEDDDDDEDEEE) shows a compositional bias: acidic residues. Polar residues-rich tracts occupy residues 842-862 (QVVS…STTP) and 876-893 (KSQQ…EAST). Phosphothreonine is present on residues Thr846 and Thr861. The span at 926 to 940 (KELVAEAREQRQHDH) shows a compositional bias: basic and acidic residues. A compositionally biased stretch (low complexity) spans 1048-1059 (QQQQQQSQQSSS).

The protein belongs to the peptidase C19 family. As to quaternary structure, interacts with atms/PAF1, but not with CycT.

It localises to the nucleus. Its subcellular location is the nucleolus. The enzyme catalyses Thiol-dependent hydrolysis of ester, thioester, amide, peptide and isopeptide bonds formed by the C-terminal Gly of ubiquitin (a 76-residue protein attached to proteins as an intracellular targeting signal).. In terms of biological role, required for maintaining multiple types of adult stem cells, including male and female germline, epithelial follicle cell and intestinal stem cells. May function as a transcriptional repressor by continually deubiquiting histone H2B at the promoters of genes critical for cellular differentiation, thereby preventing histone H3 'Lys-4' trimethylation (H3K4). Controls selective autophagy activation by ubiquitinated proteins. The chain is Ubiquitin carboxyl-terminal hydrolase 36 (Usp36) from Drosophila pseudoobscura pseudoobscura (Fruit fly).